The sequence spans 173 residues: 3-hydroxydecanoyl-[acyl-carrier-protein] dehydratase (173 aa).

The active site involves His71.

The protein belongs to the thioester dehydratase family. FabA subfamily. In terms of assembly, homodimer.

The protein localises to the cytoplasm. The catalysed reaction is a (3R)-hydroxyacyl-[ACP] = a (2E)-enoyl-[ACP] + H2O. It carries out the reaction (3R)-hydroxydecanoyl-[ACP] = (2E)-decenoyl-[ACP] + H2O. The enzyme catalyses (2E)-decenoyl-[ACP] = (3Z)-decenoyl-[ACP]. It functions in the pathway lipid metabolism; fatty acid biosynthesis. In terms of biological role, necessary for the introduction of cis unsaturation into fatty acids. Catalyzes the dehydration of (3R)-3-hydroxydecanoyl-ACP to E-(2)-decenoyl-ACP and then its isomerization to Z-(3)-decenoyl-ACP. Can catalyze the dehydratase reaction for beta-hydroxyacyl-ACPs with saturated chain lengths up to 16:0, being most active on intermediate chain length. This is 3-hydroxydecanoyl-[acyl-carrier-protein] dehydratase from Baumannia cicadellinicola subsp. Homalodisca coagulata.